The sequence spans 158 residues: S-ribosylhomocysteine lyase (158 aa).

Residues histidine 54, histidine 58, and cysteine 125 each coordinate Fe cation.

The protein belongs to the LuxS family. Homodimer. It depends on Fe cation as a cofactor.

It carries out the reaction S-(5-deoxy-D-ribos-5-yl)-L-homocysteine = (S)-4,5-dihydroxypentane-2,3-dione + L-homocysteine. In terms of biological role, involved in the synthesis of autoinducer 2 (AI-2) which is secreted by bacteria and is used to communicate both the cell density and the metabolic potential of the environment. The regulation of gene expression in response to changes in cell density is called quorum sensing. Catalyzes the transformation of S-ribosylhomocysteine (RHC) to homocysteine (HC) and 4,5-dihydroxy-2,3-pentadione (DPD). This chain is S-ribosylhomocysteine lyase, found in Lactococcus lactis subsp. cremoris (strain MG1363).